The chain runs to 412 residues: Thyroxine-binding globulin (412 aa).

The N-terminal stretch at 1–16 is a signal peptide; it reads MPLFFSLVLLILGLHC. 4 N-linked (GlcNAc...) asparagine glycosylation sites follow: Asn-35, Asn-98, Asn-164, and Asn-252. Residues Asn-292 and Lys-395 each contribute to the thyroxine site.

It belongs to the serpin family. As to expression, expressed by the liver and secreted in plasma.

It is found in the secreted. Major thyroid hormone transport protein in serum. The chain is Thyroxine-binding globulin (SERPINA7) from Ovis aries (Sheep).